A 589-amino-acid polypeptide reads, in one-letter code: Protein sprouty (589 aa).

3 disordered regions span residues 1-37 (MDRRNGGDPLAPPRPPKLLPRVHRPRAPEPTLSGVDH), 102-194 (RPSS…RPES), and 239-320 (LHLQ…MGLG). 2 stretches are compositionally biased toward low complexity: residues 104–135 (SSLSRNSSTASSTTATGISVSGSGSVSGSSSS) and 148–162 (NNSISNNNNNSINNN). Positions 163–172 (FLSHFQSAEP) are enriched in polar residues. Residues 239-272 (LHLQQHQQHLQQQQQQQQQQQQQQHLQHQQNQQH) are compositionally biased toward low complexity. Residues 276–286 (ATTTQATSVGS) are compositionally biased toward polar residues. Residues 380–499 (RCGRCRCEQC…CYGRFAGRGC (120 aa)) form the SPR domain.

The protein belongs to the sprouty family. As to quaternary structure, interacts with DRK and RasGAP1 proteins of the Ras pathway. As to expression, in ovary, expressed from stage 7 of oogenesis in the posterior follicle cells and during stage 9 when the follicle cells migrate posteriorly over the oocyte nucleus, expression is seen in the dorsal and lateral cells and is excluded from the ventral cells. Once the migration of follicle cells is complete expressed in the dorsal-anterior corner of the egg chamber. Expressed in the embryonic tracheal system, developing eye imaginal disk, embryonic chordotonal organ precursors, midline glia and wing imaginal disk.

The protein localises to the cell membrane. In terms of biological role, inhibitor of tracheal branching that restricts branch budding by antagonizing the BNL-FGF pathway (BNL: branchless, an fgf inducer of branching). Acts as an antagonist of EGFR-mediated signaling in the eye (where it is important for cell determination) midline glia, chordotonal organs, wing and ovarian follicle cells. The polypeptide is Protein sprouty (sty) (Drosophila melanogaster (Fruit fly)).